A 390-amino-acid chain; its full sequence is Transforming growth factor beta-1 proprotein (390 aa).

An N-terminal signal peptide occupies residues 1–29 (MPPSGLRLLPLLLPLPWLLVLTPGRPAAG). The tract at residues 30–74 (LSTCKTIDMELVKRKRIEAIRGQILSKLRLASPPSQGEVPPGPLP) is straightjacket domain. Residues 75–271 (EAVLALYNST…ATPLERAQHL (197 aa)) are arm domain. N-linked (GlcNAc...) asparagine glycans are attached at residues asparagine 82, asparagine 136, and asparagine 176. The segment at 226-252 (DSKDNVLHVEINGISPKRRGDLGTIHD) is bowtie tail. A Cell attachment site motif is present at residues 244-246 (RGD). 4 cysteine pairs are disulfide-bonded: cysteine 285-cysteine 294, cysteine 293-cysteine 356, cysteine 322-cysteine 387, and cysteine 326-cysteine 389.

The protein belongs to the TGF-beta family. In terms of assembly, homodimer; disulfide-linked. Interacts with the serine proteases, HTRA1 and HTRA3: the interaction with either inhibits TGFB1-mediated signaling and the HTRA protease activity is required for this inhibition. May interact with THSD4; this interaction may lead to sequestration by FBN1 microfibril assembly and attenuation of TGFB signaling. Interacts with CD109, DPT and ASPN. Interacts with EFEMP2. Interacts with TSKU; the interaction contributes to regulation of the hair cycle. Interacts with TGFBR3. As to quaternary structure, homodimer; disulfide-linked. Interacts with transforming growth factor beta-1 (TGF-beta-1) chain; interaction is non-covalent and maintains TGF-beta-1 in a latent state; each latency-associated peptide (LAP) monomer interacts with TGF-beta-1 in the other monomer. Interacts with LTBP1; leading to regulation of TGF-beta-1 activation. Interacts with LRRC32/GARP; leading to regulation of TGF-beta-1 activation on the surface of activated regulatory T-cells (Tregs). Interacts with LRRC33/NRROS; leading to regulation of TGF-beta-1 activation in macrophages and microglia. Interacts (via cell attachment site) with integrins ITGAV and ITGB6 (ITGAV:ITGB6), leading to release of the active TGF-beta-1. Interacts with NREP; the interaction results in a decrease in TGFB1 autoinduction. Interacts with HSP90AB1; inhibits latent TGFB1 activation. Homodimer; disulfide-linked. Interacts with TGF-beta receptors (TGFBR1 and TGFBR2), leading to signal transduction. Transforming growth factor beta-1 proprotein: The precursor proprotein is cleaved in the Golgi apparatus by FURIN to form Transforming growth factor beta-1 (TGF-beta-1) and Latency-associated peptide (LAP) chains, which remain non-covalently linked, rendering TGF-beta-1 inactive. In terms of processing, N-glycosylated. Deglycosylation leads to activation of Transforming growth factor beta-1 (TGF-beta-1); mechanisms triggering deglycosylation-driven activation of TGF-beta-1 are however unclear. In terms of tissue distribution, abundant in the bone matrix. Expressed in cardiomyocytes.

The protein resides in the secreted. Its subcellular location is the extracellular space. It is found in the extracellular matrix. Its function is as follows. Transforming growth factor beta-1 proprotein: Precursor of the Latency-associated peptide (LAP) and Transforming growth factor beta-1 (TGF-beta-1) chains, which constitute the regulatory and active subunit of TGF-beta-1, respectively. Functionally, required to maintain the Transforming growth factor beta-1 (TGF-beta-1) chain in a latent state during storage in extracellular matrix. Associates non-covalently with TGF-beta-1 and regulates its activation via interaction with 'milieu molecules', such as LTBP1, LRRC32/GARP and LRRC33/NRROS, that control activation of TGF-beta-1. Interaction with LRRC33/NRROS regulates activation of TGF-beta-1 in macrophages and microglia. Interaction with LRRC32/GARP controls activation of TGF-beta-1 on the surface of activated regulatory T-cells (Tregs). Interaction with integrins (ITGAV:ITGB6 or ITGAV:ITGB8) results in distortion of the Latency-associated peptide chain and subsequent release of the active TGF-beta-1. Multifunctional protein that regulates the growth and differentiation of various cell types and is involved in various processes, such as normal development, immune function, microglia function and responses to neurodegeneration. Activation into mature form follows different steps: following cleavage of the proprotein in the Golgi apparatus, Latency-associated peptide (LAP) and Transforming growth factor beta-1 (TGF-beta-1) chains remain non-covalently linked rendering TGF-beta-1 inactive during storage in extracellular matrix. At the same time, LAP chain interacts with 'milieu molecules', such as LTBP1, LRRC32/GARP and LRRC33/NRROS that control activation of TGF-beta-1 and maintain it in a latent state during storage in extracellular milieus. TGF-beta-1 is released from LAP by integrins (ITGAV:ITGB6 or ITGAV:ITGB8): integrin-binding to LAP stabilizes an alternative conformation of the LAP bowtie tail and results in distortion of the LAP chain and subsequent release of the active TGF-beta-1. Once activated following release of LAP, TGF-beta-1 acts by binding to TGF-beta receptors (TGFBR1 and TGFBR2), which transduce signal. While expressed by many cells types, TGF-beta-1 only has a very localized range of action within cell environment thanks to fine regulation of its activation by Latency-associated peptide chain (LAP) and 'milieu molecules'. Plays an important role in bone remodeling: acts as a potent stimulator of osteoblastic bone formation, causing chemotaxis, proliferation and differentiation in committed osteoblasts. Can promote either T-helper 17 cells (Th17) or regulatory T-cells (Treg) lineage differentiation in a concentration-dependent manner. At high concentrations, leads to FOXP3-mediated suppression of RORC and down-regulation of IL-17 expression, favoring Treg cell development. At low concentrations in concert with IL-6 and IL-21, leads to expression of the IL-17 and IL-23 receptors, favoring differentiation to Th17 cells. Stimulates sustained production of collagen through the activation of CREB3L1 by regulated intramembrane proteolysis (RIP). Mediates SMAD2/3 activation by inducing its phosphorylation and subsequent translocation to the nucleus. Positively regulates odontoblastic differentiation in dental papilla cells, via promotion of IPO7-mediated translocation of phosphorylated SMAD2 to the nucleus and subsequent transcription of target genes. Can induce epithelial-to-mesenchymal transition (EMT) and cell migration in various cell types. In Rattus norvegicus (Rat), this protein is Transforming growth factor beta-1 proprotein (Tgfb1).